The primary structure comprises 345 residues: Ferrochelatase (345 aa).

The Fe cation site is built by His215 and Glu296.

The protein belongs to the ferrochelatase family.

The protein localises to the cytoplasm. It carries out the reaction heme b + 2 H(+) = protoporphyrin IX + Fe(2+). It participates in porphyrin-containing compound metabolism; protoheme biosynthesis; protoheme from protoporphyrin-IX: step 1/1. Functionally, catalyzes the ferrous insertion into protoporphyrin IX. The sequence is that of Ferrochelatase from Rhodopseudomonas palustris (strain BisA53).